Reading from the N-terminus, the 355-residue chain is UPF0324 membrane protein PA5383 (355 aa).

The next 10 membrane-spanning stretches (helical) occupy residues 20–37 (IPGL…ILLG), 44–66 (HNGI…TLYP), 71–93 (GSAA…LYGL), 100–122 (IAGV…FGLA), 137–159 (TLLI…EPVV), 166–188 (VAVA…PALF), 233–255 (AVIA…SAWL), 275–297 (WFAV…PALV), 307–324 (LLAM…LSAI), and 331–353 (PLLL…TRLA).

This sequence belongs to the UPF0324 family.

The protein localises to the cell membrane. In Pseudomonas aeruginosa (strain ATCC 15692 / DSM 22644 / CIP 104116 / JCM 14847 / LMG 12228 / 1C / PRS 101 / PAO1), this protein is UPF0324 membrane protein PA5383.